We begin with the raw amino-acid sequence, 243 residues long: Terpene cyclase dpasB (243 aa).

Transmembrane regions (helical) follow at residues Val16–Ile36, Met50–Pro70, Ile79–Ala99, Leu112–Glu132, Ala141–Cys161, Leu172–Leu189, and Ile207–Val227.

It belongs to the paxB family.

It localises to the membrane. It functions in the pathway secondary metabolite biosynthesis; terpenoid biosynthesis. In terms of biological role, terpene cyclase; part of the gene cluster that mediates the biosynthesis of the diterpenoid pyrones subglutinols A and B. The first step of the pathway is the synthesis of the alpha-pyrone moiety by the polyketide synthase dpasA via condensation of one acetyl-CoA starter unit with 3 malonyl-CoA units and 2 methylations. The alpha-pyrone is then combined with geranylgeranyl pyrophosphate (GGPP) formed by the GGPP synthase dpasD through the action of the prenyltransferase dpasC to yield a linear alpha-pyrone diterpenoid. Subsequent steps in the diterpenoid pyrone biosynthetic pathway involve the decalin core formation, which is initiated by the epoxidation of the C10-C11 olefin by the FAD-dependent oxidoreductase dpasE, and is followed by a cyclization cascade catalyzed by the terpene cyclase dpasB. The FAD-linked oxidoreductase dpasF is then involved in tetrahydrofuran (THF) ring formation at the C5 unit to complete the formation of subglutinols A and B. DpasF possesses also an additional catalytic ability of multi-step oxidations to generate a new DDP analog with an enone system at the C5 named FDDP A. The chain is Terpene cyclase dpasB from Apiospora sacchari (Arthrinium sacchari).